The sequence spans 398 residues: Phosphoglycerate kinase (398 aa).

Substrate-binding positions include 20 to 22 (DLN), R35, 58 to 61 (HLGR), R118, and R155. Residues K206, G295, E326, and 354–357 (GGDS) contribute to the ATP site.

This sequence belongs to the phosphoglycerate kinase family. In terms of assembly, monomer.

Its subcellular location is the cytoplasm. The enzyme catalyses (2R)-3-phosphoglycerate + ATP = (2R)-3-phospho-glyceroyl phosphate + ADP. It functions in the pathway carbohydrate degradation; glycolysis; pyruvate from D-glyceraldehyde 3-phosphate: step 2/5. This Onion yellows phytoplasma (strain OY-M) protein is Phosphoglycerate kinase.